The following is a 321-amino-acid chain: Fe-S cluster assembly protein DRE2 (321 aa).

The interval 1–140 (MNNTAHSMSE…RRPASSSVAE (140 aa)) is N-terminal SAM-like domain. Residues 128 to 138 (IESRRPASSSV) show a composition bias toward polar residues. The segment at 128–166 (IESRRPASSSVAEKDSTASSGMGAVKLRRKPNENGGHQQ) is disordered. The tract at residues 140–177 (EKDSTASSGMGAVKLRRKPNENGGHQQKKALLWATQPE) is linker. Cys-202, Cys-217, Cys-220, and Cys-222 together coordinate [2Fe-2S] cluster. The fe-S binding site A stretch occupies residues 202-222 (CTVDFSAPRTRRKRACKGCTC). The disordered stretch occupies residues 239–263 (QLDPSEVGGTGGKRTEVTTTVKGPN). [4Fe-4S] cluster contacts are provided by Cys-283, Cys-286, Cys-294, and Cys-297. 2 short sequence motifs (cx2C motif) span residues 283 to 286 (CGSC) and 294 to 297 (CSSC). The tract at residues 283-297 (CGSCFLGDAFRCSSC) is fe-S binding site B.

It belongs to the anamorsin family. As to quaternary structure, monomer. Interacts with TAH18. Interacts with MIA40. Requires [2Fe-2S] cluster as cofactor. [4Fe-4S] cluster is required as a cofactor.

It localises to the cytoplasm. The protein resides in the mitochondrion intermembrane space. Functionally, component of the cytosolic iron-sulfur (Fe-S) protein assembly (CIA) machinery required for the maturation of extramitochondrial Fe-S proteins. Part of an electron transfer chain functioning in an early step of cytosolic Fe-S biogenesis, facilitating the de novo assembly of a [4Fe-4S] cluster on the scaffold complex CFD1-NBP35. Electrons are transferred to DRE2 from NADPH via the FAD- and FMN-containing protein TAH18. TAH18-DRE2 are also required for the assembly of the diferric tyrosyl radical cofactor of ribonucleotide reductase (RNR), probably by providing electrons for reduction during radical cofactor maturation in the catalytic small subunit RNR2. The chain is Fe-S cluster assembly protein DRE2 from Malassezia globosa (strain ATCC MYA-4612 / CBS 7966) (Dandruff-associated fungus).